Consider the following 225-residue polypeptide: Late gene expression regulator BDLF4 (225 aa).

Residues 1–20 (MSDQGRLSLPRGEGGTDEPN) form a disordered region.

The protein belongs to the herpesviridae UL92 family.

Its function is as follows. Part of the viral pre-initiation complex (vPIC) that is responsible for the expression of vPIC-dependent late genes. vPIC is composed of at least BcRF1 that binds the viral TATT box, BDLF3.5, BDLF4, BFRF2, BGLF3, BGLF4 and BVLF1. This chain is Late gene expression regulator BDLF4, found in Homo sapiens (Human).